The sequence spans 219 residues: Probable nicotinate-nucleotide adenylyltransferase (219 aa).

Belongs to the NadD family.

It catalyses the reaction nicotinate beta-D-ribonucleotide + ATP + H(+) = deamido-NAD(+) + diphosphate. It participates in cofactor biosynthesis; NAD(+) biosynthesis; deamido-NAD(+) from nicotinate D-ribonucleotide: step 1/1. Functionally, catalyzes the reversible adenylation of nicotinate mononucleotide (NaMN) to nicotinic acid adenine dinucleotide (NaAD). This chain is Probable nicotinate-nucleotide adenylyltransferase, found in Pseudomonas putida (strain W619).